A 287-amino-acid chain; its full sequence is Undecaprenyl-diphosphatase (287 aa).

7 helical membrane passes run 6-26, 45-65, 85-105, 111-131, 204-224, 238-258, and 265-285; these read LYLI…FIPV, SGKV…MWIF, AFTR…AIFI, VFYH…IMLW, ATEF…TYDL, AIAV…RAVL, and TYRG…AWLM.

Belongs to the UppP family.

It is found in the cell inner membrane. It catalyses the reaction di-trans,octa-cis-undecaprenyl diphosphate + H2O = di-trans,octa-cis-undecaprenyl phosphate + phosphate + H(+). Functionally, catalyzes the dephosphorylation of undecaprenyl diphosphate (UPP). Confers resistance to bacitracin. This is Undecaprenyl-diphosphatase from Bordetella petrii (strain ATCC BAA-461 / DSM 12804 / CCUG 43448).